The following is a 147-amino-acid chain: 3-dehydroquinate dehydratase (147 aa).

Tyr-24 functions as the Proton acceptor in the catalytic mechanism. 3 residues coordinate substrate: Asn-75, His-81, and Asp-88. Residue His-101 is the Proton donor of the active site. Residues 102–103 (IS) and Arg-112 each bind substrate.

This sequence belongs to the type-II 3-dehydroquinase family. As to quaternary structure, homododecamer.

It catalyses the reaction 3-dehydroquinate = 3-dehydroshikimate + H2O. It participates in metabolic intermediate biosynthesis; chorismate biosynthesis; chorismate from D-erythrose 4-phosphate and phosphoenolpyruvate: step 3/7. Functionally, catalyzes a trans-dehydration via an enolate intermediate. This Cereibacter sphaeroides (strain KD131 / KCTC 12085) (Rhodobacter sphaeroides) protein is 3-dehydroquinate dehydratase.